The following is a 453-amino-acid chain: Chromosomal replication initiator protein DnaA (453 aa).

The segment at 1–74 (MKEKQFWNRI…GFEIYDAEIT (74 aa)) is domain I, interacts with DnaA modulators. The tract at residues 74–113 (TPHYIFTKPQDTTSSQVEEATNLTLYDYSPKLVSIPYSDT) is domain II. Residues 114-331 (GLKEKYTFDN…GAINDITLIA (218 aa)) form a domain III, AAA+ region region. G158, G160, K161, and T162 together coordinate ATP. The tract at residues 332–453 (RVKKIKDITI…EIESIKKKIK (122 aa)) is domain IV, binds dsDNA.

The protein belongs to the DnaA family. In terms of assembly, oligomerizes as a right-handed, spiral filament on DNA at oriC. Interacts (via domains I and III) with CcrZ.

Its subcellular location is the cytoplasm. With respect to regulation, ccrZ stimulates DnaA, possibly by phosphorylation of an intermediate molecule, to initiate DNA replication. In terms of biological role, plays an essential role in the initiation and regulation of chromosomal replication. ATP-DnaA binds to the origin of replication (oriC) to initiate formation of the DNA replication initiation complex once per cell cycle. Binds the DnaA box (a 9 base pair repeat at the origin) and separates the double-stranded (ds)DNA. Forms a right-handed helical filament on oriC DNA; dsDNA binds to the exterior of the filament while single-stranded (ss)DNA is stabiized in the filament's interior. The ATP-DnaA-oriC complex binds and stabilizes one strand of the AT-rich DNA unwinding element (DUE), permitting loading of DNA polymerase. After initiation quickly degrades to an ADP-DnaA complex that is not apt for DNA replication. Binds acidic phospholipids. Its function is as follows. Mutations in this gene suppress a deletion of cell cycle regulator ccrZ. In Streptococcus pneumoniae serotype 2 (strain D39 / NCTC 7466), this protein is Chromosomal replication initiator protein DnaA.